Reading from the N-terminus, the 163-residue chain is Lipoprotein signal peptidase (163 aa).

Transmembrane regions (helical) follow at residues S4–L24, L66–W86, and D92–I112. Residues D122 and D140 contribute to the active site. The helical transmembrane segment at S132–L152 threads the bilayer.

It belongs to the peptidase A8 family.

The protein resides in the cell inner membrane. The catalysed reaction is Release of signal peptides from bacterial membrane prolipoproteins. Hydrolyzes -Xaa-Yaa-Zaa-|-(S,diacylglyceryl)Cys-, in which Xaa is hydrophobic (preferably Leu), and Yaa (Ala or Ser) and Zaa (Gly or Ala) have small, neutral side chains.. The protein operates within protein modification; lipoprotein biosynthesis (signal peptide cleavage). This protein specifically catalyzes the removal of signal peptides from prolipoproteins. This is Lipoprotein signal peptidase from Allorhizobium ampelinum (strain ATCC BAA-846 / DSM 112012 / S4) (Agrobacterium vitis (strain S4)).